The following is a 342-amino-acid chain: Outer membrane porin C (342 aa).

It belongs to the Gram-negative porin family. In terms of assembly, homotrimer.

The protein localises to the cell outer membrane. Forms pores that allow passive diffusion of small molecules across the outer membrane. In R.aquatilis OmpC is involved in the adhesion to wheat roots. The chain is Outer membrane porin C (ompC) from Rahnella aquatilis.